A 384-amino-acid polypeptide reads, in one-letter code: MDQLSDSYALYNQPVVIDNGSGIIKAGFSGEERPKALEYCLVGNTKYDKVMLEGLQGDTFIGNNAQKLRGLLKLRYPIKHGVVEDWDSMELIWSYVLNEVLQLQNIGEHPLLITEAPMNPLKNREQMAQVLFETFDVSALYVSNPAVLSLYASGRTTGCVVDCGEGYCSTVPIYDGFALPASMMRMDIGGADITEQLQFQLRKSAGVSLFSSSEREIVRTMKEKVCYLAKNIKKEEEKYLQGTQDLISTFKLPDGRCIEVGNDRYRAPEILFSPQIIGLGYDGLSDMCMQSIWKVDLDLRKPLLSSIILSGGTTTLKGFGDRMLWDLEALTKGTSKIKIIAPSERKYTTWIGGSILTGLSTFQRLWTKKSDWLEDSTRVYSNLM.

It belongs to the actin family. ARP1 subfamily. In terms of assembly, self-associates to form an actin-like filament of 8-10 monomers. Component of the dynactin complex composed of at least ARP1, JNM1, NIP100 and ARP10. Dynactin comprises a short rod of the ARP1 filament attached to ARP10 at its pointed-end and probably associated with the capping protein at its barbed-end. The rod is implicated in dynein cargo binding. A sidearm formed by NIP100 projects from the ARP1 filament and is implicated in motor binding.

The protein localises to the cytoplasm. It localises to the cytoskeleton. Its subcellular location is the membrane. Core component of the dynactin complex which assists cytoplasmic dynein by increasing its processivity and by regulation of its cargo binding. The dynactin complex is required for the spindle translocation late in anaphase and is involved in a cell wall synthesis checkpoint. ARP1 forms the backbone filament of the dynactin rod structure and serves as the scaffold for the remaining subunits. Required for proper orientation of the mitotic spindle. This is Centractin (ARP1) from Saccharomyces cerevisiae (strain ATCC 204508 / S288c) (Baker's yeast).